A 305-amino-acid polypeptide reads, in one-letter code: UDP-3-O-acyl-N-acetylglucosamine deacetylase (305 aa).

His79, His238, and Asp242 together coordinate Zn(2+). His265 functions as the Proton donor in the catalytic mechanism.

Belongs to the LpxC family. It depends on Zn(2+) as a cofactor.

It carries out the reaction a UDP-3-O-[(3R)-3-hydroxyacyl]-N-acetyl-alpha-D-glucosamine + H2O = a UDP-3-O-[(3R)-3-hydroxyacyl]-alpha-D-glucosamine + acetate. It participates in glycolipid biosynthesis; lipid IV(A) biosynthesis; lipid IV(A) from (3R)-3-hydroxytetradecanoyl-[acyl-carrier-protein] and UDP-N-acetyl-alpha-D-glucosamine: step 2/6. In terms of biological role, catalyzes the hydrolysis of UDP-3-O-myristoyl-N-acetylglucosamine to form UDP-3-O-myristoylglucosamine and acetate, the committed step in lipid A biosynthesis. In Colwellia psychrerythraea (strain 34H / ATCC BAA-681) (Vibrio psychroerythus), this protein is UDP-3-O-acyl-N-acetylglucosamine deacetylase.